We begin with the raw amino-acid sequence, 437 residues long: Adenylosuccinate synthetase (437 aa).

Residues Gly12 to Lys18 and Gly40 to Thr42 contribute to the GTP site. Asp13 functions as the Proton acceptor in the catalytic mechanism. Asp13 and Gly40 together coordinate Mg(2+). Residues Asp13 to Lys16, Asn38 to His41, Thr128, Arg142, Gln223, Thr238, and Arg302 each bind IMP. The active-site Proton donor is the His41. Substrate is bound at residue Thr298–Arg304. Residues Arg304, Lys330 to Asp332, and Ser412 to Gly414 each bind GTP.

It belongs to the adenylosuccinate synthetase family. Homodimer. The cofactor is Mg(2+).

It localises to the cytoplasm. The enzyme catalyses IMP + L-aspartate + GTP = N(6)-(1,2-dicarboxyethyl)-AMP + GDP + phosphate + 2 H(+). It participates in purine metabolism; AMP biosynthesis via de novo pathway; AMP from IMP: step 1/2. In terms of biological role, plays an important role in the de novo pathway of purine nucleotide biosynthesis. Catalyzes the first committed step in the biosynthesis of AMP from IMP. The chain is Adenylosuccinate synthetase from Trichodesmium erythraeum (strain IMS101).